A 230-amino-acid polypeptide reads, in one-letter code: 2-amino-5-formylamino-6-ribosylaminopyrimidin-4(3H)-one 5'-monophosphate deformylase (230 aa).

Fe cation contacts are provided by Glu29, His31, Asp40, and His109.

It belongs to the creatininase superfamily. FAPy deformylase family. In terms of assembly, homodimer. Requires Fe(2+) as cofactor. Zn(2+) serves as cofactor.

The enzyme catalyses 2-amino-5-formylamino-6-(5-phospho-D-ribosylamino)pyrimidin-4(3H)-one + H2O = 2,5-diamino-6-(1-D-ribosylamino)pyrimidin-4(3H)-one 5'-phosphate + formate + H(+). Its pathway is cofactor biosynthesis; coenzyme F420 biosynthesis. It participates in cofactor biosynthesis; riboflavin biosynthesis. Functionally, catalyzes the hydrolysis of the formamide of 2-amino-5-formylamino-6-ribosylamino-4(3H)-pyrimidinone 5'-monophosphate (FAPy) to form 2,5-diamino-6-ribosylamino-4(3H)-pyrimidinone 5'-phosphate (APy). The protein is 2-amino-5-formylamino-6-ribosylaminopyrimidin-4(3H)-one 5'-monophosphate deformylase of Methanobrevibacter smithii (strain ATCC 35061 / DSM 861 / OCM 144 / PS).